Here is a 132-residue protein sequence, read N- to C-terminus: Large-conductance mechanosensitive channel (132 aa).

The next 3 membrane-spanning stretches (helical) occupy residues 14–34 (VIDL…VSSL), 38–58 (IITP…LKIT), and 69–89 (FIQT…FVKV).

The protein belongs to the MscL family. Homopentamer.

The protein resides in the cell membrane. Functionally, channel that opens in response to stretch forces in the membrane lipid bilayer. May participate in the regulation of osmotic pressure changes within the cell. This Bacillus thuringiensis (strain Al Hakam) protein is Large-conductance mechanosensitive channel.